Here is a 345-residue protein sequence, read N- to C-terminus: Krueppel-like factor 3 (345 aa).

A repressor domain region spans residues 1 to 74 (MLMFDPVPVK…TVNKRSSPPS (74 aa)). Residue lysine 10 forms a Glycyl lysine isopeptide (Lys-Gly) (interchain with G-Cter in SUMO) linkage. The 9aaTAD; inactive signature appears at 60–68 (EPVDLTVNK). The CTBP-binding motif motif lies at 61 to 65 (PVDLT). The disordered stretch occupies residues 66–112 (VNKRSSPPSAGNSPSSLKFPSSHRRASPGLSMPSSSPPIKKYSPPSP). Lysine 68 participates in a covalent cross-link: Glycyl lysine isopeptide (Lys-Gly) (interchain with G-Cter in SUMO2). Low complexity-rich tracts occupy residues 70–81 (SSPPSAGNSPSS) and 92–108 (SPGL…KKYS). Phosphoserine is present on residues serine 71, serine 92, serine 101, serine 108, and serine 111. Glycyl lysine isopeptide (Lys-Gly) (interchain with G-Cter in SUMO2) cross-links involve residues lysine 196 and lysine 198. 3 positions are modified to phosphoserine: serine 216, serine 224, and serine 250. 3 consecutive C2H2-type zinc fingers follow at residues 260-284 (HRCD…RRTH), 290-314 (YKCT…FRKH), and 320-342 (FQCP…RKRH).

It belongs to the krueppel C2H2-type zinc-finger protein family. As to quaternary structure, monomer. In terms of processing, sumoylated with SUMO1. Sumoylation is enhanced by PIAS1, PIAS2alpha and PIAS2beta, and PIAS4, but not by Pc2. Enhances transcriptional repression, but has no effect on DNA binding. Sumoylation on Lys-198 is the major site.

The protein localises to the nucleus. In terms of biological role, binds to the CACCC box of erythroid cell-expressed genes. May play a role in hematopoiesis. This is Krueppel-like factor 3 (KLF3) from Homo sapiens (Human).